The sequence spans 342 residues: MQTLQTTSLRVADNQLFILDQQALPQEKRWLDASTVEALVGHIHALRVRGAPLIGLSASLLLALLAENGHSRDQLAVALDTLRASRPTAVNLMNNLDRMKQALWQEDFVPALVTEALRLIEEDKQLCDAIARAGSQLVKPGSRLLTHCNTGGLATAGVGTALGVIAHAFAAGNVNNVWVDETRPLLQGGRLTAWELGELGVPYQLITDSMAASLMAKGQVDAVWVGADRIAANGDVANKIGTYSLAVLAKFHGIPFYVAAPQTTLDPHCPNGEAIPIEQRDAREVTGVAGSFGAVQWAPENAQVYNPAFDVTPAALISGWVLDTGVVLPEAVEQGVFKSSAV.

Substrate contacts are provided by residues 49-51, Arg86, and Gln187; that span reads RGA. Asp228 acts as the Proton donor in catalysis. 238–239 is a binding site for substrate; it reads NK.

It belongs to the eIF-2B alpha/beta/delta subunits family. MtnA subfamily.

It carries out the reaction 5-(methylsulfanyl)-alpha-D-ribose 1-phosphate = 5-(methylsulfanyl)-D-ribulose 1-phosphate. It participates in amino-acid biosynthesis; L-methionine biosynthesis via salvage pathway; L-methionine from S-methyl-5-thio-alpha-D-ribose 1-phosphate: step 1/6. Functionally, catalyzes the interconversion of methylthioribose-1-phosphate (MTR-1-P) into methylthioribulose-1-phosphate (MTRu-1-P). This Enterobacter sp. (strain 638) protein is Methylthioribose-1-phosphate isomerase.